A 272-amino-acid chain; its full sequence is Protein STAY-GREEN 1, chloroplastic (272 aa).

Residues 1-50 (MGTLTTSLVVPSKLNNEQQSSIFIHKTRRKCKKNQSIVPVARLFGPAIFE) constitute a chloroplast transit peptide. Residues 201–222 (TSPSSSSGGVGGVKSTSFTSNS) form a disordered region.

It belongs to the staygreen family. Interacts with PSY1.

The protein resides in the plastid. It localises to the chloroplast. In terms of biological role, required to trigger chlorophyll degradation during leaf senescence and fruit ripening. Binds directly PSY1 to regulate the accumulation of lycopene and beta-carotene in the maturing fruits. This is Protein STAY-GREEN 1, chloroplastic from Solanum lycopersicum (Tomato).